The sequence spans 370 residues: Homoserine O-acetyltransferase (370 aa).

The 307-residue stretch at 44–350 folds into the AB hydrolase-1 domain; that stretch reads NAILVAHAWT…AYGHDAFLLE (307 aa). Serine 150 acts as the Nucleophile in catalysis. Arginine 217 contacts substrate. Catalysis depends on residues aspartate 311 and histidine 344. Aspartate 345 provides a ligand contact to substrate.

It belongs to the AB hydrolase superfamily. MetX family. In terms of assembly, homodimer.

The protein localises to the cytoplasm. It carries out the reaction L-homoserine + acetyl-CoA = O-acetyl-L-homoserine + CoA. It participates in amino-acid biosynthesis; L-methionine biosynthesis via de novo pathway; O-acetyl-L-homoserine from L-homoserine: step 1/1. Transfers an acetyl group from acetyl-CoA to L-homoserine, forming acetyl-L-homoserine. This Geotalea uraniireducens (strain Rf4) (Geobacter uraniireducens) protein is Homoserine O-acetyltransferase.